The sequence spans 283 residues: DNA repair protein RecO (283 aa).

The span at 254–264 (SSPASVGSSAT) shows a compositional bias: polar residues. Residues 254–283 (SSPASVGSSATRYFAQGDTDENDRDPPGAR) are disordered.

Belongs to the RecO family.

In terms of biological role, involved in DNA repair and RecF pathway recombination. The protein is DNA repair protein RecO of Roseiflexus sp. (strain RS-1).